The primary structure comprises 819 residues: DNA topoisomerase 4 subunit A (819 aa).

Residues 30–496 (LPDIRDGLKP…QIIEIDTASL (467 aa)) form the Topo IIA-type catalytic domain. Tyr-118 functions as the O-(5'-phospho-DNA)-tyrosine intermediate in the catalytic mechanism.

This sequence belongs to the type II topoisomerase GyrA/ParC subunit family. ParC type 2 subfamily. Heterotetramer composed of ParC and ParE.

The protein resides in the cell membrane. It carries out the reaction ATP-dependent breakage, passage and rejoining of double-stranded DNA.. Its function is as follows. Topoisomerase IV is essential for chromosome segregation. It relaxes supercoiled DNA. Performs the decatenation events required during the replication of a circular DNA molecule. This chain is DNA topoisomerase 4 subunit A, found in Streptococcus pyogenes serotype M6 (strain ATCC BAA-946 / MGAS10394).